The primary structure comprises 209 residues: Adenylate kinase (209 aa).

59 to 64 (GSGKRT) provides a ligand contact to ATP. Residues 79–108 (SSGQVLTRGVESGSETSQLAHSYVSRGERV) form an NMP region. Residues serine 80, 106 to 108 (ERV), 135 to 138 (GYPR), and glutamine 142 each bind AMP. Positions 172-205 (HRRYDPATNKXYHMLDNPPPGGRCRVMRTAPAEG) are LID. Residue arginine 173 participates in ATP binding.

Belongs to the adenylate kinase family. In terms of assembly, monomer.

It is found in the cytoplasm. The catalysed reaction is AMP + ATP = 2 ADP. Catalyzes the reversible transfer of the terminal phosphate group between ATP and AMP. Plays an important role in cellular energy homeostasis and in adenine nucleotide metabolism. In Trypanosoma brucei rhodesiense, this protein is Adenylate kinase.